The primary structure comprises 590 residues: UvrABC system protein C (590 aa).

In terms of domain architecture, GIY-YIG spans 15–98 (AEPGVYQFVA…VKRHQPRYNV (84 aa)). Residues 207–242 (GALADPLRREMAAAAQAEAFERAANLRDRLAVVEGF) form the UVR domain.

This sequence belongs to the UvrC family. As to quaternary structure, interacts with UvrB in an incision complex.

Its subcellular location is the cytoplasm. In terms of biological role, the UvrABC repair system catalyzes the recognition and processing of DNA lesions. UvrC both incises the 5' and 3' sides of the lesion. The N-terminal half is responsible for the 3' incision and the C-terminal half is responsible for the 5' incision. The chain is UvrABC system protein C from Halobacterium salinarum (strain ATCC 29341 / DSM 671 / R1).